A 605-amino-acid polypeptide reads, in one-letter code: Apoptosis-inducing factor 3 (605 aa).

The disordered stretch occupies residues 22–45 (KERGKEELSASGKGSPRAYQGNGT). The Rieske domain maps to 70 to 165 (AAVCHVKDLE…VKIEKEKVYV (96 aa)). Residues cysteine 109, histidine 111, cysteine 128, and histidine 131 each coordinate [2Fe-2S] cluster. FAD contacts are provided by residues 201–205 (GAGAA), arginine 235, lysine 240, valine 270, aspartate 467, and tryptophan 514.

It belongs to the FAD-dependent oxidoreductase family. In terms of tissue distribution, ubiquitous. Expressed in bone marrow, cerebral cortex, liver, ovary, thymus, thyroid gland and tongue (at protein level).

The protein localises to the mitochondrion. Its function is as follows. Induces apoptosis through a caspase dependent pathway. Reduces mitochondrial membrane potential. This chain is Apoptosis-inducing factor 3 (AIFM3), found in Homo sapiens (Human).